We begin with the raw amino-acid sequence, 485 residues long: MIFKFFFIFFLIILVIKISESVDSTVNVHLIKSRTELAYSFKESLSFKTISFDDESNKIDYDEFLKFHNFLQNKFPIIHRVLKRTVINKYSLLFEWTGSDKTLKPLLLNSHYDVVPVTESEWTFNPWGEIRNDNIYGRGSIDNKVIVMATMESIEAILANNYTQPIRTIYLCFGHDEELGGLNGHRMIARHFRENLVRAEAIFDEGCPFLASNFVPGFHDIIAGVGVFEKGYLFYKLTSKVNSFTHSAIPPKESAIGILSKALAKIESNPFAPIENIEKKNQLLQLFNGETIKSNPFLDAMTKTTTALSMIHAGTKPNIIPTTASAWVSHRIINGNSIEYVKSRILDLINDTRITMEIEGFLEPSPISSPFTTAYQILKQTIYQQFGGYNVKVVPTQLMANTDTRHYWDITDNIYRFMPIVGNFMDFVSIHGSNEKISIDDYIKTIHFYKKLILNFQPFSNSSNSNYINKNLKINDYCPNSIYSK.

The signal sequence occupies residues 1-21; it reads MIFKFFFIFFLIILVIKISES. Residue H111 coordinates Zn(2+). D113 is a catalytic residue. D142 provides a ligand contact to Zn(2+). The active-site Proton acceptor is E177. 3 residues coordinate Zn(2+): E178, D204, and H431.

It belongs to the peptidase M20A family. Zn(2+) is required as a cofactor.

It localises to the secreted. This chain is Probable carboxypeptidase S-like 1, found in Dictyostelium discoideum (Social amoeba).